A 180-amino-acid polypeptide reads, in one-letter code: Superoxide dismutase [Cu-Zn] (180 aa).

The first 19 residues, 1–19 (MFMNLLSQVSNAIFPQVEA), serve as a signal peptide directing secretion. Histidine 68, histidine 70, and histidine 85 together coordinate Cu cation. Cysteine 79 and cysteine 171 are oxidised to a cystine. Zn(2+) contacts are provided by histidine 85, histidine 93, histidine 102, and aspartate 105. Histidine 142 is a binding site for Cu cation.

The protein belongs to the Cu-Zn superoxide dismutase family. In terms of assembly, homodimer. Cu cation serves as cofactor. It depends on Zn(2+) as a cofactor.

The protein localises to the cytoplasm. The catalysed reaction is 2 superoxide + 2 H(+) = H2O2 + O2. Its function is as follows. Destroys radicals which are normally produced within the cells and which are toxic to biological systems. Required for normal brood size. May be involved in regulating mpk-1 phosphorylation downstream of phosphatase ptp-2 during oocyte maturation. This is Superoxide dismutase [Cu-Zn] from Caenorhabditis briggsae.